An 89-amino-acid chain; its full sequence is Small ribosomal subunit protein uS14 (89 aa).

The protein belongs to the universal ribosomal protein uS14 family. In terms of assembly, part of the 30S ribosomal subunit. Contacts proteins S3 and S10.

In terms of biological role, binds 16S rRNA, required for the assembly of 30S particles and may also be responsible for determining the conformation of the 16S rRNA at the A site. The polypeptide is Small ribosomal subunit protein uS14 (Chlorobium luteolum (strain DSM 273 / BCRC 81028 / 2530) (Pelodictyon luteolum)).